A 422-amino-acid chain; its full sequence is S-adenosylmethionine synthase (422 aa).

His15 contacts ATP. A Mg(2+)-binding site is contributed by Asp17. Glu43 contacts K(+). Residues Glu56 and Gln99 each coordinate L-methionine. A flexible loop region spans residues 99–109 (QSPDISRGVTE). Residues 166–168 (DGK), 232–233 (RF), Asp241, 247–248 (RK), Ala264, and Lys268 contribute to the ATP site. Asp241 is an L-methionine binding site. Lys272 contacts L-methionine. Positions 390–422 (AVPATTNGAGSKNGSGSKKEPKRKGKKETGAQA) are disordered.

The protein belongs to the AdoMet synthase family. As to quaternary structure, homotetramer; dimer of dimers. Mg(2+) is required as a cofactor. K(+) serves as cofactor.

The protein resides in the cytoplasm. It carries out the reaction L-methionine + ATP + H2O = S-adenosyl-L-methionine + phosphate + diphosphate. The protein operates within amino-acid biosynthesis; S-adenosyl-L-methionine biosynthesis; S-adenosyl-L-methionine from L-methionine: step 1/1. Its function is as follows. Catalyzes the formation of S-adenosylmethionine (AdoMet) from methionine and ATP. The overall synthetic reaction is composed of two sequential steps, AdoMet formation and the subsequent tripolyphosphate hydrolysis which occurs prior to release of AdoMet from the enzyme. In Sorangium cellulosum (strain So ce56) (Polyangium cellulosum (strain So ce56)), this protein is S-adenosylmethionine synthase.